A 355-amino-acid chain; its full sequence is DNA polymerase IV (355 aa).

Residues Ile7 to Gly188 enclose the UmuC domain. Mg(2+) contacts are provided by Asp11 and Asp106. Residue Glu107 is part of the active site.

The protein belongs to the DNA polymerase type-Y family. As to quaternary structure, monomer. Mg(2+) is required as a cofactor.

It is found in the cytoplasm. It catalyses the reaction DNA(n) + a 2'-deoxyribonucleoside 5'-triphosphate = DNA(n+1) + diphosphate. In terms of biological role, poorly processive, error-prone DNA polymerase involved in untargeted mutagenesis. Copies undamaged DNA at stalled replication forks, which arise in vivo from mismatched or misaligned primer ends. These misaligned primers can be extended by PolIV. Exhibits no 3'-5' exonuclease (proofreading) activity. May be involved in translesional synthesis, in conjunction with the beta clamp from PolIII. This chain is DNA polymerase IV, found in Legionella pneumophila subsp. pneumophila (strain Philadelphia 1 / ATCC 33152 / DSM 7513).